A 301-amino-acid polypeptide reads, in one-letter code: tRNA pseudouridine synthase B (301 aa).

The active-site Nucleophile is the Asp38.

It belongs to the pseudouridine synthase TruB family. Type 1 subfamily.

The catalysed reaction is uridine(55) in tRNA = pseudouridine(55) in tRNA. Its function is as follows. Responsible for synthesis of pseudouridine from uracil-55 in the psi GC loop of transfer RNAs. This is tRNA pseudouridine synthase B from Limosilactobacillus reuteri (strain DSM 20016) (Lactobacillus reuteri).